A 632-amino-acid polypeptide reads, in one-letter code: Protein NSP-INTERACTING KINASE 3 (632 aa).

The N-terminal stretch at 1-25 (MEGVRFVVWRLGFLVFVWFFDISSA) is a signal peptide. Topologically, residues 26 to 238 (TLSPTGVNYE…GTRTNGHHVA (213 aa)) are extracellular. An N-linked (GlcNAc...) asparagine glycan is attached at asparagine 96. LRR repeat units lie at residues 97–121 (LTYL…IGRL), 122–145 (EKLQ…LGEL), 147–168 (NLNY…SLSK), and 169–193 (IEGL…SART). N-linked (GlcNAc...) asparagine glycans are attached at residues asparagine 131, asparagine 155, asparagine 181, and asparagine 210. A helical transmembrane segment spans residues 239-259 (LAFAASFSAAFFVFFTSGMFL). The Cytoplasmic portion of the chain corresponds to 260–632 (WWRYRRNKQI…VEAIELSGPR (373 aa)). The residue at position 298 (threonine 298) is a Phosphothreonine. The Protein kinase domain maps to 301-584 (FNSKNILGRG…EGDGLAERWE (284 aa)). 307–315 (LGRGGYGIV) is a binding site for ATP. A Phosphothreonine modification is found at threonine 324. Lysine 329 contacts ATP. Serine 382 and serine 385 each carry phosphoserine. The interval 415–495 (YLHEQCDPKI…DVFGFGILLL (81 aa)) is interaction with geminivirus NSP protein. Aspartate 428 functions as the Proton acceptor in the catalytic mechanism. 3 positions are modified to phosphothreonine: threonine 461, threonine 462, and threonine 467. Phosphotyrosine is present on tyrosine 475. Serine 477 carries the post-translational modification Phosphoserine. Threonine 478 carries the phosphothreonine modification. The residue at position 482 (serine 482) is a Phosphoserine. Threonine 557 carries the phosphothreonine modification.

It belongs to the protein kinase superfamily. Ser/Thr protein kinase family. As to quaternary structure, oligomer. Interacts with geminivirus nuclear shuttle protein (NSP). Autophosphorylated. In terms of tissue distribution, expressed in seedlings, leaves and flowers.

It localises to the cell membrane. It carries out the reaction L-seryl-[protein] + ATP = O-phospho-L-seryl-[protein] + ADP + H(+). The catalysed reaction is L-threonyl-[protein] + ATP = O-phospho-L-threonyl-[protein] + ADP + H(+). With respect to regulation, inhibited by the viral nuclear shuttle protein (NSP) that binds to the region required for oligomerization. Involved in defense response to geminivirus infection. This is Protein NSP-INTERACTING KINASE 3 (NIK3) from Arabidopsis thaliana (Mouse-ear cress).